A 121-amino-acid polypeptide reads, in one-letter code: Large ribosomal subunit protein bL20 (121 aa).

The protein belongs to the bacterial ribosomal protein bL20 family.

Its function is as follows. Binds directly to 23S ribosomal RNA and is necessary for the in vitro assembly process of the 50S ribosomal subunit. It is not involved in the protein synthesizing functions of that subunit. This is Large ribosomal subunit protein bL20 from Beijerinckia indica subsp. indica (strain ATCC 9039 / DSM 1715 / NCIMB 8712).